A 230-amino-acid polypeptide reads, in one-letter code: MNSAIIVFPGTNRERDMAKALTLVGGKAPQMVWHRDSALPAGLDLVVLPGGFSYGDYLRSGAMGARSPILDAVRRFAEAGGHVLGVCNGFQILTEAGLLPGALMRNRDLRFICRDVHLRVETIASPYTSAYGLGEVARVPVAHHDGNYFADDATLAQLADEDRVAFRYCAADGTVGEASTPNGSRDAIAGILSANRRVLGMMPHPENLVEPALGGIGGRALFQSIVESLS.

The Glutamine amidotransferase type-1 domain maps to 3-230 (SAIIVFPGTN…LFQSIVESLS (228 aa)). The active-site Nucleophile is the Cys-87. Catalysis depends on residues His-204 and Glu-206.

As to quaternary structure, part of the FGAM synthase complex composed of 1 PurL, 1 PurQ and 2 PurS subunits.

The protein resides in the cytoplasm. The enzyme catalyses N(2)-formyl-N(1)-(5-phospho-beta-D-ribosyl)glycinamide + L-glutamine + ATP + H2O = 2-formamido-N(1)-(5-O-phospho-beta-D-ribosyl)acetamidine + L-glutamate + ADP + phosphate + H(+). The catalysed reaction is L-glutamine + H2O = L-glutamate + NH4(+). Its pathway is purine metabolism; IMP biosynthesis via de novo pathway; 5-amino-1-(5-phospho-D-ribosyl)imidazole from N(2)-formyl-N(1)-(5-phospho-D-ribosyl)glycinamide: step 1/2. Its function is as follows. Part of the phosphoribosylformylglycinamidine synthase complex involved in the purines biosynthetic pathway. Catalyzes the ATP-dependent conversion of formylglycinamide ribonucleotide (FGAR) and glutamine to yield formylglycinamidine ribonucleotide (FGAM) and glutamate. The FGAM synthase complex is composed of three subunits. PurQ produces an ammonia molecule by converting glutamine to glutamate. PurL transfers the ammonia molecule to FGAR to form FGAM in an ATP-dependent manner. PurS interacts with PurQ and PurL and is thought to assist in the transfer of the ammonia molecule from PurQ to PurL. The chain is Phosphoribosylformylglycinamidine synthase subunit PurQ from Rhodospirillum rubrum (strain ATCC 11170 / ATH 1.1.1 / DSM 467 / LMG 4362 / NCIMB 8255 / S1).